A 416-amino-acid polypeptide reads, in one-letter code: E3 ubiquitin-protein ligase RNFT1 (416 aa).

2 disordered regions span residues 1–50 (MKHR…MSLP) and 68–117 (DLSS…DSRE). Residues 7–19 (HERQSSTESKNLK) show a composition bias toward basic and acidic residues. 2 stretches are compositionally biased toward polar residues: residues 20–45 (ETTQLIMQSSSDHTHHQLGSNDSPSA) and 68–80 (DLSSQDSQHVARS). The span at 81-100 (NSRRVRPSTHGRSPSRHGHT) shows a compositional bias: basic residues. 6 consecutive transmembrane segments (helical) span residues 146–166 (LVVQHITGISVGIGLLTTFLY), 184–204 (LQCLWVLVFLLFSSFLLYYTF), 214–234 (VFMNPSLGPLHFFDALWVVGI), 237–257 (FIGKFFFMGLKCIILLVPSFV), 265–287 (YWYMALEELAQCYCTLVSTPVWF), and 302–322 (WHFGILLALLYLILKILIIFG). The tract at residues 349–400 (CSEADGMCAICQAEFTKPIALICQHVFCEECISSWFNKEKTCPLCRTLISNH) is required for ubiquitin ligase activity and for protection against ER stress-induced cell death. The segment at 356–394 (CAICQAEFTKPIALICQHVFCEECISSWFNKEKTCPLCR) adopts an RING-type zinc-finger fold.

It is found in the endoplasmic reticulum membrane. The enzyme catalyses S-ubiquitinyl-[E2 ubiquitin-conjugating enzyme]-L-cysteine + [acceptor protein]-L-lysine = [E2 ubiquitin-conjugating enzyme]-L-cysteine + N(6)-ubiquitinyl-[acceptor protein]-L-lysine.. Its pathway is protein modification; protein ubiquitination. Its function is as follows. E3 ubiquitin-protein ligase that acts in the endoplasmic reticulum (ER)-associated degradation (ERAD) pathway, which targets misfolded proteins that accumulate in the endoplasmic reticulum (ER) for ubiquitination and subsequent proteasome-mediated degradation. Protects cells from ER stress-induced apoptosis. This Xenopus laevis (African clawed frog) protein is E3 ubiquitin-protein ligase RNFT1 (rnft1).